We begin with the raw amino-acid sequence, 358 residues long: Arginine kinase (358 aa).

One can recognise a Phosphagen kinase N-terminal domain in the interval 6–88 (SVEELWAKLD…LDAVIKEYHK (83 aa)). 61–65 (GVGIY) contributes to the substrate binding site. Positions 116–353 (YIVSTRVRVG…EACLAKEKEL (238 aa)) constitute a Phosphagen kinase C-terminal domain. ATP-binding positions include 119 to 123 (STRVR) and His-182. A substrate-binding site is contributed by Glu-222. Arg-226 is an ATP binding site. Cys-269 contacts substrate. ATP is bound by residues 278 to 282 (RASVH) and 306 to 311 (RGIHGE). A substrate-binding site is contributed by Glu-311.

The protein belongs to the ATP:guanido phosphotransferase family. In terms of assembly, monomer.

It catalyses the reaction L-arginine + ATP = N(omega)-phospho-L-arginine + ADP + H(+). This is Arginine kinase from Haliotis madaka (Giant abalone).